We begin with the raw amino-acid sequence, 306 residues long: Homoserine kinase (306 aa).

91-101 contacts ATP; it reads PLARGLGSSAA.

This sequence belongs to the GHMP kinase family. Homoserine kinase subfamily.

It localises to the cytoplasm. It carries out the reaction L-homoserine + ATP = O-phospho-L-homoserine + ADP + H(+). Its pathway is amino-acid biosynthesis; L-threonine biosynthesis; L-threonine from L-aspartate: step 4/5. In terms of biological role, catalyzes the ATP-dependent phosphorylation of L-homoserine to L-homoserine phosphate. In Bacillus licheniformis (strain ATCC 14580 / DSM 13 / JCM 2505 / CCUG 7422 / NBRC 12200 / NCIMB 9375 / NCTC 10341 / NRRL NRS-1264 / Gibson 46), this protein is Homoserine kinase.